Here is a 91-residue protein sequence, read N- to C-terminus: MKVSAARLAVILVATALCAPASASPHASDTTPCCFAYIARPLPRAHIKEYFYTSGKCSNPAVVFVTRKNRQVCANPEKKWVREYINSLEMS.

The signal sequence occupies residues 1–23 (MKVSAARLAVILVATALCAPASA). Cystine bridges form between Cys-33–Cys-57 and Cys-34–Cys-73.

It belongs to the intercrine beta (chemokine CC) family.

The protein resides in the secreted. In terms of biological role, chemoattractant for blood monocytes, memory T-helper cells and eosinophils. Causes the release of histamine from basophils and activates eosinophils. May activate several chemokine receptors including CCR1, CCR3, CCR4 and CCR5. May also be an agonist of the G protein-coupled receptor GPR75. Together with GPR75, may play a role in neuron survival through activation of a downstream signaling pathway involving the PI3, Akt and MAP kinases. By activating GPR75 may also play a role in insulin secretion by islet cells. The sequence is that of C-C motif chemokine 5 (CCL5) from Macaca mulatta (Rhesus macaque).